The chain runs to 381 residues: CD2 homolog (381 aa).

The first 16 residues, 1–16 (MIIKLIFLICFKIVLS), serve as a signal peptide directing secretion. At 17-208 (INYWVRYNDT…QNYFLENIHT (192 aa)) the chain is on the extracellular side. Asn-24, Asn-73, Asn-77, Asn-85, Asn-91, Asn-104, Asn-121, Asn-133, Asn-144, Asn-176, Asn-183, and Asn-189 each carry an N-linked (GlcNAc...) asparagine; by host glycan. 2 disulfides stabilise this stretch: Cys-122–Cys-190 and Cys-129–Cys-173. A helical membrane pass occupies residues 209 to 229 (LFYMIIFIVSGITISIFISII). Topologically, residues 230-381 (TFLSLRKRKK…ISLIHVDRII (152 aa)) are cytoplasmic. The tract at residues 243-278 (EIESPPPESNEEEQCQHDDTTSIHEPSPREPLLPKP) is disordered. The span at 256 to 270 (QCQHDDTTSIHEPSP) shows a compositional bias: basic and acidic residues. 7 repeat units span residues 305 to 310 (KPCPPP), 311 to 316 (KPCPPP), 317 to 322 (KPCPPP), 323 to 328 (KPCPPP), 329 to 334 (KPCPPP), 335 to 340 (KPCPPP), and 341 to 346 (KPCPPP). The interval 305-334 (KPCPPPKPCPPPKPCPPPKPCPPPKPCPPP) is 7 X 6 AA tandem repeats of K-[LP]-C-[PRS]-[PS]-[PS]. The interval 341–362 (KPCPPPESYSPPKPLPSIPLLP) is disordered.

Belongs to the asfivirus CD2 homolog protein family. As to quaternary structure, both glycosylated and nonglycosylated forms interact (via C-terminus) with the host AP-1 complex. Cleaved into two fragments of 63 kDa and 26 kDa containing respectively the glycosylated N-terminus and the nonglycosylated C-terminus. A full-length 89-kDa glycosylated form also exists.

It localises to the host membrane. It is found in the virion membrane. The protein localises to the host Golgi apparatus. In terms of biological role, may play an immunosuppressive role by inhibiting lymphocyte proliferation and subsequently facilitating viral replication and generalization of infection. Responsible for viral hemadsorption, which may help viral spread. Increases virus replication in the tick vector at the step of virus uptake or replication in the tick gut. May play a role in the host Golgi reorganization to yield viral factories. May play a role in host cell penetration. In African swine fever virus (isolate Warthog/Namibia/Wart80/1980) (ASFV), this protein is CD2 homolog.